Reading from the N-terminus, the 547-residue chain is Cytochrome P450 monooxygenase 128 (547 aa).

A helical membrane pass occupies residues 9 to 25; it reads IPWAAGATLLAWAAYKI. N-linked (GlcNAc...) asparagine glycans are attached at residues Asn-336 and Asn-438. Cys-483 is a heme binding site.

The protein belongs to the cytochrome P450 family. Heme serves as cofactor.

The protein localises to the membrane. It participates in secondary metabolite biosynthesis. Cytochrome P450 monooxygenase that is able to use 7-ethoxycoumarin and testosterone as substrates for oxidation. This chain is Cytochrome P450 monooxygenase 128, found in Postia placenta (strain ATCC 44394 / Madison 698-R) (Brown rot fungus).